The sequence spans 150 residues: 6,7-dimethyl-8-ribityllumazine synthase (150 aa).

5-amino-6-(D-ribitylamino)uracil-binding positions include Phe-11, 43 to 45, and 67 to 69; these read VYD and AVI. (2S)-2-hydroxy-3-oxobutyl phosphate is bound at residue 72–73; sequence AT. Catalysis depends on His-75, which acts as the Proton donor. Leu-100 provides a ligand contact to 5-amino-6-(D-ribitylamino)uracil. Arg-115 provides a ligand contact to (2S)-2-hydroxy-3-oxobutyl phosphate.

Belongs to the DMRL synthase family.

It carries out the reaction (2S)-2-hydroxy-3-oxobutyl phosphate + 5-amino-6-(D-ribitylamino)uracil = 6,7-dimethyl-8-(1-D-ribityl)lumazine + phosphate + 2 H2O + H(+). Its pathway is cofactor biosynthesis; riboflavin biosynthesis; riboflavin from 2-hydroxy-3-oxobutyl phosphate and 5-amino-6-(D-ribitylamino)uracil: step 1/2. Catalyzes the formation of 6,7-dimethyl-8-ribityllumazine by condensation of 5-amino-6-(D-ribitylamino)uracil with 3,4-dihydroxy-2-butanone 4-phosphate. This is the penultimate step in the biosynthesis of riboflavin. The polypeptide is 6,7-dimethyl-8-ribityllumazine synthase (Pyrobaculum neutrophilum (strain DSM 2338 / JCM 9278 / NBRC 100436 / V24Sta) (Thermoproteus neutrophilus)).